We begin with the raw amino-acid sequence, 545 residues long: Chaperonin GroEL (545 aa).

Residues 29 to 32 (TLGP), lysine 50, 86 to 90 (DGTTT), glycine 413, and aspartate 495 each bind ATP.

Belongs to the chaperonin (HSP60) family. Forms a cylinder of 14 subunits composed of two heptameric rings stacked back-to-back. Interacts with the co-chaperonin GroES.

Its subcellular location is the cytoplasm. It carries out the reaction ATP + H2O + a folded polypeptide = ADP + phosphate + an unfolded polypeptide.. In terms of biological role, together with its co-chaperonin GroES, plays an essential role in assisting protein folding. The GroEL-GroES system forms a nano-cage that allows encapsulation of the non-native substrate proteins and provides a physical environment optimized to promote and accelerate protein folding. The sequence is that of Chaperonin GroEL from Borreliella afzelii (strain PKo) (Borrelia afzelii).